Reading from the N-terminus, the 518-residue chain is Motile sperm domain-containing protein 2 (518 aa).

The Cytoplasmic segment spans residues 1 to 496 (MAENHAQNKA…QVQRCIWFQQ (496 aa)). The CRAL-TRIO domain maps to 82–239 (ESSIPRWLLE…HMGGTDPFKY (158 aa)). The segment at 252–308 (PLCENGPITSEDETSSKEDIESDGKETLETISNEEQTPLLKKINPTESTSKAEENEK) is disordered. A compositionally biased stretch (basic and acidic residues) spans 265-279 (TSSKEDIESDGKETL). Residues 327–445 (LLHISPAEEL…MEHRLRCHTV (119 aa)) enclose the MSP domain. A required for FFAT motif binding and phosphorylated FFAT motif binding region spans residues 365–366 (RT). The helical; Anchor for type IV membrane protein transmembrane segment at 497-518 (LLLSLTMLLLAFVTSFFYLLYS) threads the bilayer.

As to quaternary structure, homooligomer. Interacts (via MSP domain) with STARD3NL (via FFAT motif), RMDN3 (via FFAT motif), OSBPL1A (via FFAT motif) and CERT1 (via FFAT motif). Interacts (via MSP domain) with STARD3 (via phosphorylated FFAT motif); this interaction depends on the critical phosphorylation of STARD3 on 'Ser-209'. Interacts with RB1CC1 (via phosphorylated FFAT motif), MIGA2 (via phosphorylated FFAT motif) and OSBPL1A (via FFAT motif). As to expression, highly expressed in CD14(+) monocytes, and at lower levels in neutrophils. Does not show significant expression in B-cells or T-cells.

It is found in the endoplasmic reticulum membrane. Endoplasmic reticulum-anchored protein that mediates the formation of contact sites between the endoplasmic (ER) and endosomes, mitochondria or Golgi through interaction with conventional- and phosphorylated-FFAT-containing organelle-bound proteins. In addition, forms endoplasmic reticulum (ER)-lipid droplets (LDs) contacts through a direct protein-membrane interaction and participates in LDs homeostasis. The attachment mechanism involves an amphipathic helix that has an affinity for lipid packing defects present at the surface of LDs. Promotes migration of primary monocytes and neutrophils, in response to various chemokines. The protein is Motile sperm domain-containing protein 2 of Homo sapiens (Human).